Consider the following 227-residue polypeptide: Isopentenyl-diphosphate delta-isomerase 2 (227 aa).

Residue Lys-36 participates in substrate binding. Residues His-40 and His-51 each coordinate Mg(2+). Positions 49 to 199 (LLHRAFSVVL…EVKVTPWLRT (151 aa)) constitute a Nudix hydrolase domain. Positions 70 and 74 each coordinate substrate. Residue Ser-86 is part of the active site. Residue Ser-87 participates in substrate binding. Positions 146 and 148 each coordinate Mg(2+). Glu-148 is an active-site residue. A Microbody targeting signal motif is present at residues 225-227 (HRV).

This sequence belongs to the IPP isomerase type 1 family. The cofactor is Mg(2+). As to expression, muscle-specific expression.

The protein resides in the peroxisome. The catalysed reaction is isopentenyl diphosphate = dimethylallyl diphosphate. Its pathway is isoprenoid biosynthesis; dimethylallyl diphosphate biosynthesis; dimethylallyl diphosphate from isopentenyl diphosphate: step 1/1. Catalyzes the 1,3-allylic rearrangement of the homoallylic substrate isopentenyl (IPP) to its highly electrophilic allylic isomer, dimethylallyl diphosphate (DMAPP). This chain is Isopentenyl-diphosphate delta-isomerase 2 (IDI2), found in Homo sapiens (Human).